The sequence spans 271 residues: MHRRAAIQESDDEEDETYNDVVPESPSSCEDSKISKPTPKKRRNVEKRVVSVPIADVEGSKSRGEVYPPSDSWAWRKYGQKPIKGSPYPRGYYRCSSSKGCPARKQVERSRVDPSKLMITYACDHNHPFPSSSANTKSHHRSSVVLKTAKKEEEYEEEEEELTVTAAEEPPAGLDLSHVDSPLLLGGCYSEIGEFGWFYDASISSSSGSSNFLDVTLERGFSVGQEEDESLFGDLGDLPDCASVFRRGTVATEEQHRRCDFGAIPFCDSSR.

2 disordered regions span residues 1 to 47 (MHRR…NVEK) and 130 to 166 (PSSS…TVTA). A compositionally biased stretch (acidic residues) spans 9–18 (ESDDEEDETY). The segment at residues 64–130 (GEVYPPSDSW…YACDHNHPFP (67 aa)) is a DNA-binding region (WRKY).

It belongs to the WRKY group II-e family.

Its subcellular location is the nucleus. In terms of biological role, transcription factor. Interacts specifically with the W box (5'-(T)TGAC[CT]-3'), a frequently occurring elicitor-responsive cis-acting element. The chain is Probable WRKY transcription factor 69 (WRKY69) from Arabidopsis thaliana (Mouse-ear cress).